The primary structure comprises 486 residues: RAC-beta serine/threonine-protein kinase A (486 aa).

The PH domain maps to 5-110; that stretch reads MVIKEGWLQK…WIIAIQTVAN (106 aa). Residues Ser133 and Ser136 are each glycosylated (O-linked (GlcNAc) serine). The Protein kinase domain occupies 157–414; sequence FDYLKLLGKG…AQEVMSHRFF (258 aa). ATP-binding positions include 163–171 and Lys186; that span reads LGKGTFGKV. Asp280 (proton acceptor) is an active-site residue. Thr311 carries O-linked (GlcNAc) threonine glycosylation. Residue Thr314 is modified to Phosphothreonine. O-linked (GlcNAc) threonine glycosylation is present at Thr318. Residues 415 to 486 enclose the AGC-kinase C-terminal domain; that stretch reads VSINWQDVTE…QFSYSASIRE (72 aa). The tract at residues 455–486 is disordered; the sequence is LTPPDRYDNLDALESDQRPHFPQFSYSASIRE. Residues 459–473 are compositionally biased toward basic and acidic residues; it reads DRYDNLDALESDQRP. Residue Ser479 is modified to Phosphoserine. The O-linked (GlcNAc) serine; alternate glycan is linked to Ser479.

This sequence belongs to the protein kinase superfamily. AGC Ser/Thr protein kinase family. RAC subfamily. Post-translationally, phosphorylation on Thr-314 and Ser-479 is required for full activity. Phosphorylation of the activation loop at Thr-314 by PDPK1/PDK1 is a prerequisite for full activation. Phosphorylation by mTORC2 at Ser-479 in response to growth factors plays a key role in AKT1 activation by facilitating subsequent phosphorylation of the activation loop by PDPK1/PDK1.

It carries out the reaction L-seryl-[protein] + ATP = O-phospho-L-seryl-[protein] + ADP + H(+). The enzyme catalyses L-threonyl-[protein] + ATP = O-phospho-L-threonyl-[protein] + ADP + H(+). Two specific sites, one in the kinase domain (Thr-314) and the other in the C-terminal regulatory region (Ser-479), need to be phosphorylated for its full activation. In terms of biological role, akt2-a is one of several closely related serine/threonine-protein kinases known as the AKT kinase, and which regulate many processes including metabolism, proliferation, cell survival, growth and angiogenesis. This is mediated through serine and/or threonine phosphorylation of a range of downstream substrates. Over 100 substrate candidates have been reported so far, but for most of them, no isoform specificity has been reported. May be involved in the inhibition of ciliogenesis. This is RAC-beta serine/threonine-protein kinase A (akt2-a) from Xenopus laevis (African clawed frog).